Reading from the N-terminus, the 93-residue chain is Cell division topological specificity factor (93 aa).

This sequence belongs to the MinE family.

Prevents the cell division inhibition by proteins MinC and MinD at internal division sites while permitting inhibition at polar sites. This ensures cell division at the proper site by restricting the formation of a division septum at the midpoint of the long axis of the cell. The sequence is that of Cell division topological specificity factor from Methylococcus capsulatus (strain ATCC 33009 / NCIMB 11132 / Bath).